The sequence spans 571 residues: Sulfite reductase [NADPH] hemoprotein beta-component (571 aa).

The [4Fe-4S] cluster site is built by C435, C441, C480, and C484. Siroheme is bound at residue C484.

Belongs to the nitrite and sulfite reductase 4Fe-4S domain family. In terms of assembly, alpha(8)-beta(8). The alpha component is a flavoprotein, the beta component is a hemoprotein. Siroheme is required as a cofactor. [4Fe-4S] cluster serves as cofactor.

The enzyme catalyses hydrogen sulfide + 3 NADP(+) + 3 H2O = sulfite + 3 NADPH + 4 H(+). It functions in the pathway sulfur metabolism; hydrogen sulfide biosynthesis; hydrogen sulfide from sulfite (NADPH route): step 1/1. Functionally, component of the sulfite reductase complex that catalyzes the 6-electron reduction of sulfite to sulfide. This is one of several activities required for the biosynthesis of L-cysteine from sulfate. This chain is Sulfite reductase [NADPH] hemoprotein beta-component, found in Erwinia tasmaniensis (strain DSM 17950 / CFBP 7177 / CIP 109463 / NCPPB 4357 / Et1/99).